The following is a 193-amino-acid chain: Acyl carrier protein phosphodiesterase (193 aa).

This sequence belongs to the AcpH family.

It carries out the reaction holo-[ACP] + H2O = apo-[ACP] + (R)-4'-phosphopantetheine + H(+). Its function is as follows. Converts holo-ACP to apo-ACP by hydrolytic cleavage of the phosphopantetheine prosthetic group from ACP. The protein is Acyl carrier protein phosphodiesterase of Serratia proteamaculans (strain 568).